Reading from the N-terminus, the 184-residue chain is Ribosome maturation factor RimM (184 aa).

Residues 112-184 (TDSYYWIDLI…SNKTISLDWQ (73 aa)) enclose the PRC barrel domain.

It belongs to the RimM family. Binds ribosomal protein uS19.

The protein localises to the cytoplasm. An accessory protein needed during the final step in the assembly of 30S ribosomal subunit, possibly for assembly of the head region. Essential for efficient processing of 16S rRNA. May be needed both before and after RbfA during the maturation of 16S rRNA. It has affinity for free ribosomal 30S subunits but not for 70S ribosomes. This Polynucleobacter necessarius subsp. necessarius (strain STIR1) protein is Ribosome maturation factor RimM.